Reading from the N-terminus, the 204-residue chain is 3-isopropylmalate dehydratase small subunit (204 aa).

The protein belongs to the LeuD family. LeuD type 1 subfamily. Heterodimer of LeuC and LeuD.

The enzyme catalyses (2R,3S)-3-isopropylmalate = (2S)-2-isopropylmalate. The protein operates within amino-acid biosynthesis; L-leucine biosynthesis; L-leucine from 3-methyl-2-oxobutanoate: step 2/4. Its function is as follows. Catalyzes the isomerization between 2-isopropylmalate and 3-isopropylmalate, via the formation of 2-isopropylmaleate. This is 3-isopropylmalate dehydratase small subunit from Psychromonas ingrahamii (strain DSM 17664 / CCUG 51855 / 37).